The primary structure comprises 2193 residues: Genome polyprotein (2193 aa).

The segment at 1 to 22 (MGSQVSTQRSGSHENSNSATEG) is disordered. Residue glycine 2 is the site of N-myristoyl glycine; by host attachment. Over 2 to 1503 (GSQVSTQRSG…HLNRAVLVMQ (1502 aa)) the chain is Cytoplasmic. 2 amphipathic alpha-helix regions span residues 566 to 588 (GDRV…LTQA) and 568 to 588 (RVAD…LTQA). Active-site for protease 2A activity residues include histidine 883 and aspartate 901. Residues cysteine 918 and cysteine 920 each coordinate Zn(2+). Cysteine 972 functions as the For protease 2A activity in the catalytic mechanism. Zn(2+) is bound by residues cysteine 978 and histidine 980. Positions 1112 to 1184 (SASWLKKFND…EQSAASQEDL (73 aa)) are membrane-binding. The oligomerization stretch occupies residues 1112–1250 (SASWLKKFND…SPGTGKSLAT (139 aa)). Residues 1133–1137 (SNKIS) are RNA-binding. Positions 1216–1374 (EKRMNNYMQF…YKTDLGRLDA (159 aa)) constitute an SF3 helicase domain. 1240-1247 (GSPGTGKS) provides a ligand contact to ATP. The Zn(2+) site is built by cysteine 1381, cysteine 1392, serine 1393, and cysteine 1397. The segment at 1381–1397 (CSENNTANFKRCSPLVC) adopts a C4-type; degenerate zinc-finger fold. The RNA-binding stretch occupies residues 1424–1431 (EYSNRSAI). The oligomerization stretch occupies residues 1435-1440 (IEALFQ). An intramembrane segment occupies 1504–1519 (SIATVVAVVSLVYVIY). The Cytoplasmic segment spans residues 1520–2193 (KLFAGFQGAY…NLRRNWLELF (674 aa)). At tyrosine 1529 the chain carries O-(5'-phospho-RNA)-tyrosine. The region spanning 1549–1727 (GPSLDFALSL…FCAGLKRSYF (179 aa)) is the Peptidase C3 domain. Catalysis depends on for protease 3C activity residues histidine 1588, glutamate 1619, and cysteine 1695. A RdRp catalytic domain is found at 1958 to 2073 (GSLFAFDYSG…ASYPFPIDCL (116 aa)). 2 residues coordinate Mg(2+): aspartate 1964 and aspartate 2060.

The protein belongs to the picornaviruses polyprotein family. As to quaternary structure, interacts with capsid protein VP1 and capsid protein VP3 to form heterotrimeric protomers. Interacts with capsid protein VP0, and capsid protein VP3 to form heterotrimeric protomers. Five protomers subsequently associate to form pentamers which serve as building blocks for the capsid. Interacts with capsid protein VP2, capsid protein VP3 and capsid protein VP4 following cleavage of capsid protein VP0. Interacts with host SCARB2. Interacts with host ARF6; this interaction mediates viral endocytosis. In terms of assembly, interacts with capsid protein VP1 and capsid protein VP3 in the mature capsid. Interacts with host SCARB2. As to quaternary structure, interacts with capsid protein VP0 and capsid protein VP1 to form heterotrimeric protomers. Five protomers subsequently associate to form pentamers which serve as building blocks for the capsid. Interacts with capsid protein VP4 in the mature capsid. Interacts with protein 2C; this interaction may be important for virion morphogenesis. Interacts with capsid protein VP1 and capsid protein VP3. In terms of assembly, homodimer. As to quaternary structure, interacts with host BAX; this interaction activates the mitochondrial apoptotic pathway. Interacts with host ILF2. Homohexamer; forms a hexameric ring structure with 6-fold symmetry characteristic of AAA+ ATPases. Interacts (via N-terminus) with host RTN3 (via reticulon domain); this interaction is important for viral replication. Interacts with capsid protein VP3; this interaction may be important for virion morphogenesis. In terms of assembly, interacts with protein 3CD. As to quaternary structure, homodimer. Interacts with host GBF1. Interacts (via GOLD domain) with host ACBD3 (via GOLD domain); this interaction allows the formation of a viral protein 3A/ACBD3 heterotetramer with a 2:2 stoichiometry, which will stimulate the recruitment of host PI4KB in order to synthesize PI4P at the viral RNA replication sites. Interacts with RNA-directed RNA polymerase. In terms of assembly, interacts with host IFIH1/MDA5; this interaction inhibits host IFIH1. Interacts with host RIGI. As to quaternary structure, interacts with protein 3AB and with RNA-directed RNA polymerase. Interacts with Viral protein genome-linked and with protein 3CD. Mg(2+) is required as a cofactor. In terms of processing, specific enzymatic cleavages in vivo by the viral proteases yield processing intermediates and the mature proteins. Post-translationally, myristoylation is required for the formation of pentamers during virus assembly. Further assembly of 12 pentamers and a molecule of genomic RNA generates the provirion. During virion maturation, immature virions are rendered infectious following cleavage of VP0 into VP4 and VP2. This maturation seems to be an autocatalytic event triggered by the presence of RNA in the capsid and it is followed by a conformational change infectious virion. In terms of processing, myristoylation is required during RNA encapsidation and formation of the mature virus particle. Post-translationally, VPg is uridylylated by the polymerase into VPg-pUpU. This acts as a nucleotide-peptide primer for the genomic RNA replication.

Its subcellular location is the virion. It localises to the host cytoplasm. The protein resides in the host cytoplasmic vesicle membrane. The protein localises to the host nucleus. The enzyme catalyses a ribonucleoside 5'-triphosphate + H2O = a ribonucleoside 5'-diphosphate + phosphate + H(+). The catalysed reaction is Selective cleavage of Tyr-|-Gly bond in the picornavirus polyprotein.. It catalyses the reaction RNA(n) + a ribonucleoside 5'-triphosphate = RNA(n+1) + diphosphate. It carries out the reaction Selective cleavage of Gln-|-Gly bond in the poliovirus polyprotein. In other picornavirus reactions Glu may be substituted for Gln, and Ser or Thr for Gly.. Its activity is regulated as follows. Replication or transcription is subject to high level of random mutations by the nucleotide analog ribavirin. Functionally, forms an icosahedral capsid of pseudo T=3 symmetry with capsid proteins VP2 and VP3. The capsid is 300 Angstroms in diameter, composed of 60 copies of each capsid protein and enclosing the viral positive strand RNA genome. Capsid protein VP1 mainly forms the vertices of the capsid. Capsid protein VP1, together with VP2, interacts with host cell receptor SCARB2 to provide virion attachment to target host cells. This attachment induces virion internalization. This attachment induces virion internalization. After binding to its receptor, the capsid undergoes conformational changes. Capsid protein VP1 N-terminus (that contains an amphipathic alpha-helix) and capsid protein VP4 are externalized. Together, they shape a pore in the host membrane through which viral genome is translocated to host cell cytoplasm. In terms of biological role, forms an icosahedral capsid of pseudo T=3 symmetry with capsid proteins VP2 and VP3. The capsid is 300 Angstroms in diameter, composed of 60 copies of each capsid protein and enclosing the viral positive strand RNA genome. Capsid protein VP2, together with VP1, interacts with host cell receptor SCARB2 to provide virion attachment to target host cells. Its function is as follows. Forms an icosahedral capsid of pseudo T=3 symmetry with capsid proteins VP2 and VP3. The capsid is 300 Angstroms in diameter, composed of 60 copies of each capsid protein and enclosing the viral positive strand RNA genome. Lies on the inner surface of the capsid shell. After binding to the host receptor, the capsid undergoes conformational changes. Capsid protein VP4 is released, Capsid protein VP1 N-terminus is externalized, and together, they shape a pore in the host membrane through which the viral genome is translocated into the host cell cytoplasm. Functionally, component of immature procapsids, which is cleaved into capsid proteins VP4 and VP2 after maturation. Allows the capsid to remain inactive before the maturation step. In terms of biological role, cysteine protease that cleaves viral polyprotein and specific host proteins. It is responsible for the autocatalytic cleavage between the P1 and P2 regions, which is the first cleavage occurring in the polyprotein. Also cleaves the host translation initiation factor EIF4G1, in order to shut down the capped cellular mRNA translation. Inhibits the host nucleus-cytoplasm protein and RNA trafficking by cleaving host members of the nuclear pores. Counteracts stress granule formation probably by antagonizing its assembly or promoting its dissassembly. Cleaves and inhibits host IFIH1/MDA5, thereby inhibiting the type-I IFN production and the establishment of the antiviral state. Cleaves and inhibits host MAVS, thereby inhibiting the type-I IFN production and the establishment of the antiviral state. Its function is as follows. Plays an essential role in the virus replication cycle by acting as a viroporin. Creates a pore in the host endoplasmic reticulum and as a consequence releases Ca2+ in the cytoplasm of infected cell. In turn, high levels of cytoplasmic calcium may trigger membrane trafficking and transport of viral ER-associated proteins to viroplasms, sites of viral genome replication. Also activates the mitochondrial apoptotic pathway by activating host BAX. Induces and associates with structural rearrangements of intracellular membranes. Displays RNA-binding, nucleotide binding and NTPase activities. May play a role in virion morphogenesis and viral RNA encapsidation by interacting with the capsid protein VP3. Functionally, localizes the viral replication complex to the surface of membranous vesicles. Together with protein 3CD binds the Cis-Active RNA Element (CRE) which is involved in RNA synthesis initiation. Acts as a cofactor to stimulate the activity of 3D polymerase, maybe through a nucleid acid chaperone activity. In terms of biological role, localizes the viral replication complex to the surface of membranous vesicles. It inhibits host cell endoplasmic reticulum-to-Golgi apparatus transport and causes the disassembly of the Golgi complex, possibly through GBF1 interaction. This would result in depletion of MHC, trail receptors and IFN receptors at the host cell surface. Plays an essential role in viral RNA replication by recruiting ACBD3 and PI4KB at the viral replication sites, thereby allowing the formation of the rearranged membranous structures where viral replication takes place. Its function is as follows. Acts as a primer for viral RNA replication and remains covalently bound to viral genomic RNA. VPg is uridylylated prior to priming replication into VPg-pUpU. The oriI viral genomic sequence may act as a template for this. The VPg-pUpU is then used as primer on the genomic RNA poly(A) by the RNA-dependent RNA polymerase to replicate the viral genome. During genome replication, the VPg-RNA linkage is removed by the host TDP2, thereby accelerating replication. During the late stage of the replication cycle, host TDP2 is excluded from sites of viral RNA synthesis and encapsidation, allowing for the generation of progeny virions. Involved in the viral replication complex and viral polypeptide maturation. It exhibits protease activity with a specificity and catalytic efficiency that is different from protease 3C. Protein 3CD lacks polymerase activity. Protein 3CD binds to the 5'UTR of the viral genome. Functionally, major viral protease that mediates proteolytic processing of the polyprotein. Cleaves host EIF5B, contributing to host translation shutoff. Also cleaves host PABPC1, contributing to host translation shutoff. Disassembles host cytoplasmic stress granules by cleaving host G3BP1, although this effect is less prononced than the inhibition induced by protease 2A. Cleaves host RIGI and thus contributes to the inhibition of type I interferon production. Cleaves host IRF7 and thus contributes to the inhibition of type I interferon production. Cleaves host HNRNPA1 thereby increasing the translation of apoptosis protease activating factor APAF1, leading to apoptosis of the host cell. Cleaves host NLRP1, triggers host N-glycine-mediated degradation of the autoinhibitory NLRP1 N-terminal fragment. In terms of biological role, replicates the viral genomic RNA on the surface of intracellular membranes. May form linear arrays of subunits that propagate along a strong head-to-tail interaction called interface-I. Covalently attaches UMP to a tyrosine of VPg, which is used to prime RNA synthesis. The positive stranded RNA genome is first replicated at virus induced membranous vesicles, creating a dsRNA genomic replication form. This dsRNA is then used as template to synthesize positive stranded RNA genomes. ss(+)RNA genomes are either translated, replicated or encapsidated. The protein is Genome polyprotein of Homo sapiens (Human).